The sequence spans 464 residues: Cysteine--tRNA ligase (464 aa).

Position 27 (Cys27) interacts with Zn(2+). The short motif at 29-39 (PTVYNFFHIGN) is the 'HIGH' region element. Residues Cys207, His232, and Glu236 each contribute to the Zn(2+) site. The short motif at 264–268 (KMSKS) is the 'KMSKS' region element. Lys267 lines the ATP pocket.

It belongs to the class-I aminoacyl-tRNA synthetase family. As to quaternary structure, monomer. The cofactor is Zn(2+).

The protein localises to the cytoplasm. It carries out the reaction tRNA(Cys) + L-cysteine + ATP = L-cysteinyl-tRNA(Cys) + AMP + diphosphate. The polypeptide is Cysteine--tRNA ligase (Clostridium acetobutylicum (strain ATCC 824 / DSM 792 / JCM 1419 / IAM 19013 / LMG 5710 / NBRC 13948 / NRRL B-527 / VKM B-1787 / 2291 / W)).